Here is a 276-residue protein sequence, read N- to C-terminus: Tryptophan synthase alpha chain (276 aa).

Active-site proton acceptor residues include Glu-55 and Asp-66.

Belongs to the TrpA family. As to quaternary structure, tetramer of two alpha and two beta chains.

It carries out the reaction (1S,2R)-1-C-(indol-3-yl)glycerol 3-phosphate + L-serine = D-glyceraldehyde 3-phosphate + L-tryptophan + H2O. It functions in the pathway amino-acid biosynthesis; L-tryptophan biosynthesis; L-tryptophan from chorismate: step 5/5. Its function is as follows. The alpha subunit is responsible for the aldol cleavage of indoleglycerol phosphate to indole and glyceraldehyde 3-phosphate. This is Tryptophan synthase alpha chain from Gloeobacter violaceus (strain ATCC 29082 / PCC 7421).